Consider the following 422-residue polypeptide: Probable protein phosphatase 2C 43 (422 aa).

Residues 117–393 (SSGSYADKGD…DNVTVVVICF (277 aa)) enclose the PPM-type phosphatase domain. Mn(2+) is bound by residues Asp163, Gly164, Asp341, and Asp384.

It belongs to the PP2C family. Requires Mg(2+) as cofactor. It depends on Mn(2+) as a cofactor.

The catalysed reaction is O-phospho-L-seryl-[protein] + H2O = L-seryl-[protein] + phosphate. The enzyme catalyses O-phospho-L-threonyl-[protein] + H2O = L-threonyl-[protein] + phosphate. This is Probable protein phosphatase 2C 43 from Arabidopsis thaliana (Mouse-ear cress).